Consider the following 81-residue polypeptide: Teretoxin Tsu6.8 (81 aa).

The first 21 residues, 1 to 21 (MATSGRLLCLCLVLGLIFESL), serve as a signal peptide directing secretion. Residues 22–45 (GHPVMGEKRAGENASPSARSLPKR) constitute a propeptide that is removed on maturation.

Belongs to the teretoxin M (TM) superfamily. In terms of processing, contains 3 disulfide bonds. As to expression, expressed by the venom duct.

The protein localises to the secreted. The polypeptide is Teretoxin Tsu6.8 (Terebra subulata (Chocolate spotted auger)).